Here is a 310-residue protein sequence, read N- to C-terminus: Imidazolonepropionase (310 aa).

Residues Y42 and H75 each contribute to the 4-imidazolone-5-propanoate site. Y42 is an N-formimidoyl-L-glutamate binding site. H140 contacts Fe(3+). A Zn(2+)-binding site is contributed by H140. E143 is a binding site for 4-imidazolone-5-propanoate. D215 is a Fe(3+) binding site. A Zn(2+)-binding site is contributed by D215. Positions 217 and 219 each coordinate N-formimidoyl-L-glutamate. Residue S220 participates in 4-imidazolone-5-propanoate binding.

Belongs to the metallo-dependent hydrolases superfamily. HutI family. The cofactor is Zn(2+). Fe(3+) serves as cofactor.

The protein localises to the cytoplasm. It catalyses the reaction 4-imidazolone-5-propanoate + H2O = N-formimidoyl-L-glutamate. The protein operates within amino-acid degradation; L-histidine degradation into L-glutamate; N-formimidoyl-L-glutamate from L-histidine: step 3/3. Functionally, catalyzes the hydrolytic cleavage of the carbon-nitrogen bond in imidazolone-5-propanoate to yield N-formimidoyl-L-glutamate. It is the third step in the universal histidine degradation pathway. The sequence is that of Imidazolonepropionase (hutI) from Streptococcus gordonii.